Here is a 143-residue protein sequence, read N- to C-terminus: Large ribosomal subunit protein uL11 (143 aa).

This sequence belongs to the universal ribosomal protein uL11 family. In terms of assembly, part of the ribosomal stalk of the 50S ribosomal subunit. Interacts with L10 and the large rRNA to form the base of the stalk. L10 forms an elongated spine to which L12 dimers bind in a sequential fashion forming a multimeric L10(L12)X complex. One or more lysine residues are methylated.

Forms part of the ribosomal stalk which helps the ribosome interact with GTP-bound translation factors. The protein is Large ribosomal subunit protein uL11 of Rhizobium etli (strain CIAT 652).